The following is a 373-amino-acid chain: Mannitol-1-phosphate 5-dehydrogenase (373 aa).

3-14 (ALHFGAGNIGRG) contacts NAD(+).

Belongs to the mannitol dehydrogenase family.

It carries out the reaction D-mannitol 1-phosphate + NAD(+) = beta-D-fructose 6-phosphate + NADH + H(+). The protein is Mannitol-1-phosphate 5-dehydrogenase of Bacillus pumilus (strain SAFR-032).